The sequence spans 1361 residues: Pre-mRNA-splicing factor RSE1 (1361 aa).

2 disordered regions span residues 788–811 (NNEE…INSS) and 893–912 (VNKQ…EDEM). Composition is skewed to acidic residues over residues 789–808 (NEEE…EEEI) and 903–912 (ESNEEEEDEM).

The protein belongs to the RSE1 family. As to quaternary structure, belongs to the SF3B complex, a U2 associated sub-complex of the spliceosome. The SF3B complex is composed of at least CUS1, HSH49, HSH155, RDS3 and RSE1. Also belongs to the CWC complex (or CEF1-associated complex), a spliceosome sub-complex reminiscent of a late-stage spliceosome composed of the U2, U5 and U6 snRNAs and at least BUD13, BUD31, BRR2, CDC40, CEF1, CLF1, CUS1, CWC2, CWC15, CWC21, CWC22, CWC23, CWC24, CWC25, CWC27, ECM2, HSH155, IST3, ISY1, LEA1, MSL1, NTC20, PRP8, PRP9, PRP11, PRP19, PRP21, PRP22, PRP45, PRP46, SLU7, SMB1, SMD1, SMD2, SMD3, SMX2, SMX3, SNT309, SNU114, SPP2, SYF1, SYF2, RSE1 and YJU2. Interacts with RDS3.

The protein localises to the nucleus. Functionally, involved in G2/M transition. Required for pre-mRNA splicing and endoplasmic reticulum (ER) to Golgi secretion pathway. U2 snRNPs associated protein required for the pre-spliceosome assembly. The involvement in ER to Golgi secretion is probably indirect and due to the splicing of the pre-mRNA coding for SAR1, a small GTP-binding protein required for COPII vesicle formation from the ER. In Saccharomyces cerevisiae (strain ATCC 204508 / S288c) (Baker's yeast), this protein is Pre-mRNA-splicing factor RSE1 (RSE1).